A 474-amino-acid polypeptide reads, in one-letter code: Probable periplasmic serine endoprotease DegP-like (474 aa).

The N-terminal stretch at 1-25 is a signal peptide; the sequence is MRNLKSVTPLLMAALLWGQSLLAQA. Residues His-113, Asp-143, and Ser-216 each act as charge relay system in the active site. Substrate contacts are provided by residues 214 to 216 and 271 to 275; these read GNS and LGVVI. PDZ domains are found at residues 260–351 and 357–463; these read LKAD…VRDG and KVTI…LRQG.

The protein belongs to the peptidase S1C family.

Its subcellular location is the periplasm. The catalysed reaction is Acts on substrates that are at least partially unfolded. The cleavage site P1 residue is normally between a pair of hydrophobic residues, such as Val-|-Val.. In terms of biological role, might be efficient in the degradation of transiently denatured and unfolded proteins which accumulate in the periplasm following stress conditions. The polypeptide is Probable periplasmic serine endoprotease DegP-like (Ectopseudomonas mendocina (strain ymp) (Pseudomonas mendocina)).